A 63-amino-acid polypeptide reads, in one-letter code: Ferredoxin (63 aa).

In terms of domain architecture, 4Fe-4S ferredoxin-type spans 2–29 (KVTVDQDLCIACGTCIDLCPSVFDWDDE). Residues C10, C13, C16, and C55 each contribute to the [4Fe-4S] cluster site.

[4Fe-4S] cluster is required as a cofactor.

Ferredoxins are iron-sulfur proteins that transfer electrons in a wide variety of metabolic reactions. The protein is Ferredoxin of Moorella thermoacetica (Clostridium thermoaceticum).